We begin with the raw amino-acid sequence, 520 residues long: Sensory neuron membrane protein 2 (520 aa).

At 1–7 (MLGKHSK) the chain is on the cytoplasmic side. A helical transmembrane segment spans residues 8–28 (IFFGVSLIFLVIAIVLASWGF). Over 29-468 (QKIVNKQIQK…DSHKLLGYVE (440 aa)) the chain is Extracellular. 7 N-linked (GlcNAc...) asparagine glycosylation sites follow: Asn44, Asn67, Asn104, Asn228, Asn271, Asn313, and Asn342. Disulfide bonds link Cys267-Cys337, Cys298-Cys361, and Cys339-Cys350. Residues 469 to 489 (VAKWFLLTIAIISVIASAVAV) form a helical membrane-spanning segment. Residues 490–520 (ARANALLSWPRNSNSVSFILGPSVTQVNKGN) lie on the Cytoplasmic side of the membrane.

It belongs to the CD36 family. In terms of tissue distribution, localizes to cells surrounding the sensory neurons in the antenna. Associate in a ratio of 2:1 with the neurons expressing the other subtype SNMP1.

The protein localises to the cell membrane. Functionally, plays an olfactory role that is not restricted to pheromone sensitivity. May play a role in the elimination of lipophilic components from the sensillum lymph. In Heliothis virescens (Tobacco budworm moth), this protein is Sensory neuron membrane protein 2.